The sequence spans 616 residues: MPKYRSATTTHGRNMAGARALWRATGMTDADFGKPIIAVVNSFTQFVPGHVHLRDLGKLVAEQIEAAGGVAKEFNTIAVDDGIAMGHGGMLYSLPSRELIADSVEYMVNAHCADAMVCISNCDKITPGMLMASLRLNIPVIFVSGGPMEAGKTKLSDQIIKLDLVDAMIQGADPKVSDSQSDQVERSACPTCGSCSGMFTANSMNCLTEALGLSQPGNGSLLATHSDRKQLFLNAGKRIVELTKRYYEQNDESALPRNIASKAAFENAMTLDIAMGGSTNTVLHLLAAAQEAEIDFTMSDIDKLSRKVPQLCKVAPSTQKYHMEDVHRAGGVIGILGELDRAGLLNRDVKNVLGLTLPQTLEQYDVMLTQDDAVKNMFRAGPAGIRTTQAFSQDCRWDTLDDDRANGCIRSLEHAYSKDGGLAVLYGNFAENGCIVKTAGVDDSILKFTGPAKVYESQDDAVEAILGGKVVAGDVVVIRYEGPKGGPGMQEMLYPTSFLKSMGLGKACALITDGRFSGGTSGLSIGHVSPEAASGGSIGLIEDGDLIAIDIPNRGIQLQVSDAELAARREAQEARGDKAWTPKNRERQISFALRAYASLATSADKGAVRDKSKLGG.

D81 contacts Mg(2+). C122 lines the [2Fe-2S] cluster pocket. Residues D123 and K124 each contribute to the Mg(2+) site. K124 carries the post-translational modification N6-carboxylysine. [2Fe-2S] cluster is bound at residue C195. E491 provides a ligand contact to Mg(2+). The active-site Proton acceptor is S517.

Belongs to the IlvD/Edd family. As to quaternary structure, homodimer. [2Fe-2S] cluster serves as cofactor. It depends on Mg(2+) as a cofactor.

It catalyses the reaction (2R)-2,3-dihydroxy-3-methylbutanoate = 3-methyl-2-oxobutanoate + H2O. It carries out the reaction (2R,3R)-2,3-dihydroxy-3-methylpentanoate = (S)-3-methyl-2-oxopentanoate + H2O. It participates in amino-acid biosynthesis; L-isoleucine biosynthesis; L-isoleucine from 2-oxobutanoate: step 3/4. The protein operates within amino-acid biosynthesis; L-valine biosynthesis; L-valine from pyruvate: step 3/4. Functionally, functions in the biosynthesis of branched-chain amino acids. Catalyzes the dehydration of (2R,3R)-2,3-dihydroxy-3-methylpentanoate (2,3-dihydroxy-3-methylvalerate) into 2-oxo-3-methylpentanoate (2-oxo-3-methylvalerate) and of (2R)-2,3-dihydroxy-3-methylbutanoate (2,3-dihydroxyisovalerate) into 2-oxo-3-methylbutanoate (2-oxoisovalerate), the penultimate precursor to L-isoleucine and L-valine, respectively. The polypeptide is Dihydroxy-acid dehydratase (Escherichia coli O157:H7 (strain EC4115 / EHEC)).